The primary structure comprises 72 residues: Large ribosomal subunit protein bL31 (72 aa).

This sequence belongs to the bacterial ribosomal protein bL31 family. Type A subfamily. In terms of assembly, part of the 50S ribosomal subunit.

In terms of biological role, binds the 23S rRNA. This is Large ribosomal subunit protein bL31 from Prosthecochloris aestuarii (strain DSM 271 / SK 413).